We begin with the raw amino-acid sequence, 193 residues long: dCTP deaminase (193 aa).

DCTP contacts are provided by residues 110-115 (RSSLAR), aspartate 128, 136-138 (VLE), tyrosine 171, lysine 178, and glutamine 182. Glutamate 138 (proton donor/acceptor) is an active-site residue. The tract at residues 169-193 (RPYNRREDAKYRNQQGAVASRIDKD) is disordered.

Belongs to the dCTP deaminase family. In terms of assembly, homotrimer.

The enzyme catalyses dCTP + H2O + H(+) = dUTP + NH4(+). It functions in the pathway pyrimidine metabolism; dUMP biosynthesis; dUMP from dCTP (dUTP route): step 1/2. In terms of biological role, catalyzes the deamination of dCTP to dUTP. This chain is dCTP deaminase, found in Escherichia coli O1:K1 / APEC.